An 886-amino-acid polypeptide reads, in one-letter code: DNA double-strand break repair Rad50 ATPase (886 aa).

Residues R13, N33–S39, and Q128 contribute to the ATP site. Coiled coils occupy residues E183–T360 and K400–A433. The Zinc-hook domain occupies L392–E489. 2 residues coordinate Zn(2+): C437 and C440. 2 coiled-coil regions span residues E489–K518 and S545–E713. Residue F792–E797 participates in ATP binding.

Belongs to the SMC family. RAD50 subfamily. As to quaternary structure, homodimer. Forms a heterotetramer composed of two Mre11 subunits and two Rad50 subunits. The cofactor is Zn(2+).

Part of the Rad50/Mre11 complex, which is involved in the early steps of DNA double-strand break (DSB) repair. The complex may facilitate opening of the processed DNA ends to aid in the recruitment of HerA and NurA. Rad50 controls the balance between DNA end bridging and DNA resection via ATP-dependent structural rearrangements of the Rad50/Mre11 complex. The polypeptide is DNA double-strand break repair Rad50 ATPase (Archaeoglobus fulgidus (strain ATCC 49558 / DSM 4304 / JCM 9628 / NBRC 100126 / VC-16)).